The following is a 368-amino-acid chain: Agmatine deiminase (368 aa).

The Amidino-cysteine intermediate role is filled by cysteine 357.

This sequence belongs to the agmatine deiminase family. In terms of assembly, homodimer.

It catalyses the reaction agmatine + H2O = N-carbamoylputrescine + NH4(+). Its pathway is amine and polyamine biosynthesis; putrescine biosynthesis via agmatine pathway; N-carbamoylputrescine from agmatine: step 1/1. Its function is as follows. Mediates the hydrolysis of agmatine into N-carbamoylputrescine in the arginine decarboxylase (ADC) pathway of putrescine biosynthesis, a basic polyamine. In Pseudomonas fluorescens (strain SBW25), this protein is Agmatine deiminase.